Here is a 499-residue protein sequence, read N- to C-terminus: Thioredoxin reductase 1, cytoplasmic (499 aa).

Residues 22–23 (SG), 42–43 (DF), 58–59 (TC), and 63–67 (GCIPK) each bind FAD. Cys-59 and Cys-64 are oxidised to a cystine. At Lys-68 the chain carries N6-succinyllysine. Tyr-131 is modified (phosphotyrosine). FAD is bound by residues 131 to 132 (YG) and Thr-161. Residues Arg-166, 198-204 (ASYVALE), 221-222 (RS), Arg-226, 226-228 (RGF), 292-293 (GR), and Lys-315 each bind NADP(+). Tyr-200 provides a ligand contact to FAD. FAD contacts are provided by residues Asp-334, 341–343 (ELT), and His-472. Glu-341 lines the NADP(+) pocket. Residue His-472 is the Proton acceptor of the active site. A cross-link (cysteinyl-selenocysteine (Cys-Sec)) is located at residues 497–498 (CU). A non-standard amino acid (selenocysteine) is located at residue Sec-498.

It belongs to the class-I pyridine nucleotide-disulfide oxidoreductase family. In terms of assembly, homodimer. Requires FAD as cofactor. ISGylated.

Its subcellular location is the cytoplasm. The catalysed reaction is [thioredoxin]-dithiol + NADP(+) = [thioredoxin]-disulfide + NADPH + H(+). The enzyme catalyses H2O2 + NADPH + H(+) = NADP(+) + 2 H2O. Its function is as follows. Reduces disulfideprotein thioredoxin (Trx) to its dithiol-containing form. Homodimeric flavoprotein involved in the regulation of cellular redox reactions, growth and differentiation. Contains a selenocysteine residue at the C-terminal active site that is essential for catalysis. Also has reductase activity on hydrogen peroxide (H2O2). The protein is Thioredoxin reductase 1, cytoplasmic (TXNRD1) of Bos taurus (Bovine).